The primary structure comprises 409 residues: Putative fatty acyl-CoA reductase 7 (409 aa).

It belongs to the fatty acyl-CoA reductase family.

The protein is Putative fatty acyl-CoA reductase 7 (FAR7) of Arabidopsis thaliana (Mouse-ear cress).